The sequence spans 183 residues: ATP synthase subunit b, chloroplastic (183 aa).

Residues 27–49 form a helical membrane-spanning segment; that stretch reads LATNPINLSVVLGVLIFFGKGVL.

This sequence belongs to the ATPase B chain family. In terms of assembly, F-type ATPases have 2 components, F(1) - the catalytic core - and F(0) - the membrane proton channel. F(1) has five subunits: alpha(3), beta(3), gamma(1), delta(1), epsilon(1). F(0) has four main subunits: a(1), b(1), b'(1) and c(10-14). The alpha and beta chains form an alternating ring which encloses part of the gamma chain. F(1) is attached to F(0) by a central stalk formed by the gamma and epsilon chains, while a peripheral stalk is formed by the delta, b and b' chains.

The protein resides in the plastid. Its subcellular location is the chloroplast thylakoid membrane. Its function is as follows. F(1)F(0) ATP synthase produces ATP from ADP in the presence of a proton or sodium gradient. F-type ATPases consist of two structural domains, F(1) containing the extramembraneous catalytic core and F(0) containing the membrane proton channel, linked together by a central stalk and a peripheral stalk. During catalysis, ATP synthesis in the catalytic domain of F(1) is coupled via a rotary mechanism of the central stalk subunits to proton translocation. Functionally, component of the F(0) channel, it forms part of the peripheral stalk, linking F(1) to F(0). The sequence is that of ATP synthase subunit b, chloroplastic from Ranunculus macranthus (Large buttercup).